The primary structure comprises 862 residues: Alanine--tRNA ligase (862 aa).

4 residues coordinate Zn(2+): His-552, His-556, Cys-653, and His-657.

This sequence belongs to the class-II aminoacyl-tRNA synthetase family. Zn(2+) serves as cofactor.

Its subcellular location is the cytoplasm. The enzyme catalyses tRNA(Ala) + L-alanine + ATP = L-alanyl-tRNA(Ala) + AMP + diphosphate. In terms of biological role, catalyzes the attachment of alanine to tRNA(Ala) in a two-step reaction: alanine is first activated by ATP to form Ala-AMP and then transferred to the acceptor end of tRNA(Ala). Also edits incorrectly charged Ser-tRNA(Ala) and Gly-tRNA(Ala) via its editing domain. The protein is Alanine--tRNA ligase of Nitrosospira multiformis (strain ATCC 25196 / NCIMB 11849 / C 71).